Here is a 373-residue protein sequence, read N- to C-terminus: Carboxylesterase/phospholipase LipF (373 aa).

Residues 116-118 (HGG) carry the Involved in the stabilization of the negatively charged intermediate by the formation of the oxyanion hole motif. Catalysis depends on residues Ser-186, Glu-285, and His-315.

The protein belongs to the 'GDXG' lipolytic enzyme family.

The catalysed reaction is a carboxylic ester + H2O = an alcohol + a carboxylate + H(+). The enzyme catalyses a 1,2-diacyl-sn-glycero-3-phosphocholine + H2O = phosphocholine + a 1,2-diacyl-sn-glycerol + H(+). Functionally, a short-chain esterase and phospholipase. This is Carboxylesterase/phospholipase LipF from Mycobacterium tuberculosis (strain CDC 1551 / Oshkosh).